The following is a 93-amino-acid chain: Large ribosomal subunit protein bL31B (93 aa).

The protein belongs to the bacterial ribosomal protein bL31 family. Type B subfamily. In terms of assembly, part of the 50S ribosomal subunit.

This is Large ribosomal subunit protein bL31B from Psychrobacter arcticus (strain DSM 17307 / VKM B-2377 / 273-4).